The following is a 283-amino-acid chain: Formamidopyrimidine-DNA glycosylase (283 aa).

Proline 2 (schiff-base intermediate with DNA) is an active-site residue. Glutamate 3 functions as the Proton donor in the catalytic mechanism. Lysine 58 serves as the catalytic Proton donor; for beta-elimination activity. 3 residues coordinate DNA: histidine 100, arginine 119, and arginine 162. The segment at 247–283 adopts an FPG-type zinc-finger fold; that stretch reads DVYGREGEPCRRAGCDGTVQRITQSGRSSFYCAQCQR. Arginine 273 (proton donor; for delta-elimination activity) is an active-site residue.

Belongs to the FPG family. Monomer. Zn(2+) serves as cofactor.

The catalysed reaction is Hydrolysis of DNA containing ring-opened 7-methylguanine residues, releasing 2,6-diamino-4-hydroxy-5-(N-methyl)formamidopyrimidine.. It catalyses the reaction 2'-deoxyribonucleotide-(2'-deoxyribose 5'-phosphate)-2'-deoxyribonucleotide-DNA = a 3'-end 2'-deoxyribonucleotide-(2,3-dehydro-2,3-deoxyribose 5'-phosphate)-DNA + a 5'-end 5'-phospho-2'-deoxyribonucleoside-DNA + H(+). Involved in base excision repair of DNA damaged by oxidation or by mutagenic agents. Acts as a DNA glycosylase that recognizes and removes damaged bases. Has a preference for oxidized purines, such as 7,8-dihydro-8-oxoguanine (8-oxoG). Has AP (apurinic/apyrimidinic) lyase activity and introduces nicks in the DNA strand. Cleaves the DNA backbone by beta-delta elimination to generate a single-strand break at the site of the removed base with both 3'- and 5'-phosphates. The protein is Formamidopyrimidine-DNA glycosylase of Ruegeria pomeroyi (strain ATCC 700808 / DSM 15171 / DSS-3) (Silicibacter pomeroyi).